Here is a 422-residue protein sequence, read N- to C-terminus: GPI mannosyltransferase 1 (422 aa).

A run of 8 helical transmembrane segments spans residues 10 to 30 (TTPL…YGIY), 82 to 102 (FPAF…WLIL), 162 to 182 (IILG…PAIV), 216 to 236 (LKFG…MFAI), 282 to 302 (IESF…PLAL), 327 to 347 (SQYF…SSFL), 352 to 372 (LGIF…QQGY), and 385 to 405 (GLWL…GVII).

This sequence belongs to the PIGM family.

Its subcellular location is the endoplasmic reticulum membrane. Its pathway is glycolipid biosynthesis; glycosylphosphatidylinositol-anchor biosynthesis. Mannosyltransferase involved in glycosylphosphatidylinositol-anchor biosynthesis. Transfers the first alpha-1,4-mannose to GlcN-acyl-PI during GPI precursor assembly. Required for cell wall integrity. This chain is GPI mannosyltransferase 1 (GPI14), found in Gibberella zeae (strain ATCC MYA-4620 / CBS 123657 / FGSC 9075 / NRRL 31084 / PH-1) (Wheat head blight fungus).